A 226-amino-acid chain; its full sequence is Probable functional amyloid protease FapD (226 aa).

The N-terminal stretch at 1–18 is a signal peptide; it reads MRRATLCLLLLLAGPSWA. A Peptidase C39 domain is found at 50-180; sequence QKTDFSCGAA…AGWNGIVFAV (131 aa). Residue C56 is part of the active site.

It belongs to the FapD family.

It localises to the periplasm. In terms of biological role, probable cysteine protease that is involved in processing fibril precursors. Upon overexpression of the endogenous six-gene locus (fapA-fapF) in situ, cells form large clumps during liquid growth, make large amounts of biofilm and produce amyloid fibrils. Expression of the 6 gene operon in E.coli strain BL21(DE3) induces flocculation and biofilm formation with copious extracellular fibrils. In Pseudomonas fluorescens, this protein is Probable functional amyloid protease FapD.